Consider the following 3530-residue polypeptide: Unconventional myosin-XV (3530 aa).

3 disordered regions span residues 1–46 (MAKE…RTPK), 615–710 (AGMD…PAHV), and 730–1057 (EVPP…QKTL). The span at 663–681 (PPVPPRPPSSGPPPAPPLS) shows a compositional bias: pro residues. Composition is skewed to low complexity over residues 682-693 (PALSGLPRPASP), 753-763 (AAFGFPGASPR), and 823-835 (SPAPRRAAGRLGP). The span at 836-850 (PGSPLPGSPRPPSPP) shows a compositional bias: pro residues. Over residues 859–869 (RSSLNLPSRLP) the composition is skewed to low complexity. Positions 903 to 913 (PLEHRESPREP) are enriched in basic and acidic residues. Residues 1027–1038 (TKPPTPAPPKDV) are compositionally biased toward pro residues. The 678-residue stretch at 1222 to 1899 (DGVEDMTQLE…LYQLLESMRE (678 aa)) folds into the Myosin motor domain. An ATP-binding site is contributed by 1315–1322 (GESGSGKT). Positions 1323–1350 (EATKLILRYLAAMNQKREVMQQIKILEA) form a coiled coil. The interval 1792–1799 (FMRCLKPN) is actin-binding. Residues 1888-2029 (EHLYQLLESM…AQVPQVAPVR (142 aa)) are neck or regulatory domain. 3 consecutive IQ domains span residues 1902–1924 (LNLAALTLQRCLRGFFIKRRFRS), 1925–1954 (LRHKIILLQSRARGYLARQRYQQMRRSLVK), and 1955–1976 (FRSLVHAYVSRRRYLKLRAEWR). Residues 2030–3530 (TPRLQAEPRV…TLPPSEITLL (1501 aa)) form a tail region. In terms of domain architecture, MyTH4 1 spans 2065-2217 (MLTVPLRTPL…PTQLEWTATY (153 aa)). Disordered stretches follow at residues 2311 to 2381 (AASR…GEPA), 2414 to 2446 (YRMKGGGQPGGGSSSGTEDTPRRPPEPKPIPGL), 2490 to 2509 (AEKPPAPEAQPTSVGTGPPA), and 2644 to 2665 (TSAPRPSMAPTSALPSRSLEPP). Positions 2349–2371 (GYSSHNQDGTNGETEAQRGTATH) are enriched in polar residues. Residues 2417-2427 (KGGGQPGGGSS) are compositionally biased toward gly residues. Residues 2867-2953 (KDSDYVVAVR…PSELVQPAAA (87 aa)) form the SH3 domain. The 155-residue stretch at 3050–3204 (FTKTPLQESL…PSSIELRAML (155 aa)) folds into the MyTH4 2 domain. The FERM domain occupies 3209-3530 (SKRQLFLLPG…TLPPSEITLL (322 aa)).

It belongs to the TRAFAC class myosin-kinesin ATPase superfamily. Myosin family. In terms of assembly, interacts with the third PDZ domain of WHRN which is necessary for localization of WHRN to stereocilium tips. Interacts with EPS8. Interacts with FASLG. Highly expressed in pituitary. Also expressed at lower levels in adult brain, kidney, liver, lung, pancreas, placenta and skeletal muscle. Not expressed in brain. In the pituitary, highly expressed in anterior gland cells.

It is found in the cell projection. The protein localises to the stereocilium. It localises to the cytoplasm. Its subcellular location is the cytoskeleton. Its function is as follows. Myosins are actin-based motor molecules with ATPase activity. Unconventional myosins serve in intracellular movements. Their highly divergent tails are presumed to bind to membranous compartments, which would be moved relative to actin filaments. Required for the arrangement of stereocilia in mature hair bundles. The sequence is that of Unconventional myosin-XV (MYO15A) from Homo sapiens (Human).